Here is a 325-residue protein sequence, read N- to C-terminus: Thiamine-monophosphate kinase (325 aa).

Mg(2+) is bound by residues Asp30, Ser45, Thr46, and Asp47. His54 serves as a coordination point for substrate. Positions 75 and 122 each coordinate Mg(2+). ATP-binding positions include 121–122 (GD) and Arg146. Asp212 is a Mg(2+) binding site. Ser214 is an ATP binding site. Asp215 serves as a coordination point for Mg(2+). Substrate-binding residues include Glu263 and Tyr319.

This sequence belongs to the thiamine-monophosphate kinase family.

It carries out the reaction thiamine phosphate + ATP = thiamine diphosphate + ADP. It participates in cofactor biosynthesis; thiamine diphosphate biosynthesis; thiamine diphosphate from thiamine phosphate: step 1/1. Its function is as follows. Catalyzes the ATP-dependent phosphorylation of thiamine-monophosphate (TMP) to form thiamine-pyrophosphate (TPP), the active form of vitamin B1. In Escherichia coli O157:H7, this protein is Thiamine-monophosphate kinase.